The primary structure comprises 76 residues: Heat shock factor-binding protein 1 (76 aa).

It belongs to the HSBP1 family. In terms of assembly, homohexamer. Associates with heptad repeats of HSF1 trimers and probably also HSF1 monomers, and with HSP70. Association with HSF1 trimers and HSP70 coincides with attenuation of heat shock response and the conversion of HSF1 trimer to monomer.

The protein resides in the nucleus. Functionally, negative regulator of the heat shock response. Negatively affects HSF1 DNA-binding activity. May have a role in the suppression of the activation of the stress response during the aging process. The chain is Heat shock factor-binding protein 1 (HSBP1) from Bos taurus (Bovine).